A 273-amino-acid polypeptide reads, in one-letter code: Thiazole synthase (273 aa).

Lys-113 (schiff-base intermediate with DXP) is an active-site residue. Residues Gly-174, 201–202, and 223–224 contribute to the 1-deoxy-D-xylulose 5-phosphate site; these read AG and NT.

It belongs to the ThiG family. As to quaternary structure, homotetramer. Forms heterodimers with either ThiH or ThiS.

Its subcellular location is the cytoplasm. It carries out the reaction [ThiS sulfur-carrier protein]-C-terminal-Gly-aminoethanethioate + 2-iminoacetate + 1-deoxy-D-xylulose 5-phosphate = [ThiS sulfur-carrier protein]-C-terminal Gly-Gly + 2-[(2R,5Z)-2-carboxy-4-methylthiazol-5(2H)-ylidene]ethyl phosphate + 2 H2O + H(+). It participates in cofactor biosynthesis; thiamine diphosphate biosynthesis. Functionally, catalyzes the rearrangement of 1-deoxy-D-xylulose 5-phosphate (DXP) to produce the thiazole phosphate moiety of thiamine. Sulfur is provided by the thiocarboxylate moiety of the carrier protein ThiS. In vitro, sulfur can be provided by H(2)S. The chain is Thiazole synthase from Salinibacter ruber (strain DSM 13855 / M31).